Here is a 462-residue protein sequence, read N- to C-terminus: 3beta-hydroxysteroid dehydrogenase/Delta(5)-Delta(4) isomerase 1 (462 aa).

NAD(+)-binding positions include 51-56 (GGAGHL), Tyr-220, and Lys-224. Residue Lys-224 is the Proton donor of the active site. Transmembrane regions (helical) follow at residues 321–341 (VGTF…SSMI) and 428–448 (VAVL…FTFW).

This sequence belongs to the 3-beta-HSD family. As to expression, expressed exclusively in the neuron-like XXX(L/R) cells through all four larval stages and becomes fainter in adults.

It localises to the membrane. The catalysed reaction is a 3beta-hydroxy-Delta(5)-steroid + NAD(+) = a 3-oxo-Delta(5)-steroid + NADH + H(+). The enzyme catalyses cholesterol + NAD(+) = cholest-5-en-3-one + NADH + H(+). It carries out the reaction a 3-oxo-Delta(5)-steroid = a 3-oxo-Delta(4)-steroid. It catalyses the reaction cholest-5-en-3-one = cholest-4-en-3-one. It participates in steroid hormone biosynthesis; dafachronic acid biosynthesis. Its function is as follows. Hydroxysteroid dehydrogenase involved in the biosynthesis of dafrachonic acids. Catalyzes the dehydrogenation of cholesterol or its derivatives and the isomerization of the double carbon bond on the sterol ring. Modifies sterols into a Delta(4)-3-keto-sterols such as cholest-4-en-3-one, precursor of Delta(4)-dafachronic acid. Contributes to the production of Delta(7)-dafachronic acid in the XXX cells. Dafachronic acids act as ligands and bind directly to the nuclear hormone receptor (NHR) daf-12 suppressing dauer formation and inducing reproductive growth. Acts in parallel to AKT-1 to promote reproductive development via DAF-16/FoxO and DAF-12. This Caenorhabditis elegans protein is 3beta-hydroxysteroid dehydrogenase/Delta(5)-Delta(4) isomerase 1.